The sequence spans 302 residues: GTP cyclohydrolase FolE2 (302 aa).

It belongs to the GTP cyclohydrolase IV family.

The enzyme catalyses GTP + H2O = 7,8-dihydroneopterin 3'-triphosphate + formate + H(+). It participates in cofactor biosynthesis; 7,8-dihydroneopterin triphosphate biosynthesis; 7,8-dihydroneopterin triphosphate from GTP: step 1/1. Converts GTP to 7,8-dihydroneopterin triphosphate. The chain is GTP cyclohydrolase FolE2 from Pseudoalteromonas translucida (strain TAC 125).